Here is a 172-residue protein sequence, read N- to C-terminus: Myosin regulatory light polypeptide 9 (172 aa).

The segment covering 1 to 16 (MSSKRAKAKTTKKRPQ) has biased composition (basic residues). Residues 1–20 (MSSKRAKAKTTKKRPQRATS) are disordered. At S2 the chain carries N-acetylserine. Residue T19 is modified to Phosphothreonine; by MLCK, CIT and ROCK2. At S20 the chain carries Phosphoserine; by CDC42BP, CIT, MLCK, PAK1, ROCK1, ROCK2, DAPK1, DAPK2 and ZIPK/DAPK3. 3 EF-hand domains span residues 29–64 (SQIQ…LGKN), 98–133 (DPED…MGDR), and 134–169 (FTDE…GAKD). Ca(2+) contacts are provided by D42, N44, D46, and D53.

Myosin is a hexamer of 2 heavy chains and 4 light chains: interacts with myosin heavy chain MYO19. Interacts with LUZP1; the interaction results in inhibition of phosphorylation of MYL9 by DAPK3. Post-translationally, phosphorylation increases the actin-activated myosin ATPase activity and thereby regulates the contractile activity. It is required to generate the driving force in the migration of the cells but not necessary for localization of myosin-2 at the leading edge. Phosphorylation is required for myotube formation. Phosphorylated by DAPK3; DAPK3-mediated phosphorylation is inhibited by LUZP1. As to expression, smooth muscle tissues and in some, but not all, nonmuscle cells.

Its subcellular location is the cytoplasm. It localises to the cytoskeleton. The protein resides in the cell cortex. Functionally, myosin regulatory subunit that plays an important role in regulation of both smooth muscle and nonmuscle cell contractile activity via its phosphorylation. Implicated in cytokinesis, receptor capping, and cell locomotion. In myoblasts, may regulate PIEZO1-dependent cortical actomyosin assembly involved in myotube formation. In Homo sapiens (Human), this protein is Myosin regulatory light polypeptide 9 (MYL9).